The following is an 833-amino-acid chain: Major vault protein (833 aa).

MVP repeat units lie at residues 10-52, 54-115, 119-170, 171-223, 224-278, 280-328, 329-380, and 381-433; these read RYYY…VSVP, RHYC…RKLQ, PNTG…TVIY, PNTA…TMLS, ELKA…VSLN, KEYV…LVVG, KEEA…MALD, and RNEG…SIKT.

In terms of assembly, the vault ribonucleoprotein particle is a huge (400 A x 670 A) cage structure of 12.9 MDa. It consists of a dimer of half-vaults, with each half-vault comprising 39 identical major vault protein (MVP) chains, PARP4 and one or more vault RNAs (vRNAs).

Its subcellular location is the cytoplasm. It localises to the nucleus. Its function is as follows. Required for normal vault structure. Vaults are multi-subunit structures that may act as scaffolds for proteins involved in signal transduction. Vaults may also play a role in nucleo-cytoplasmic transport. The sequence is that of Major vault protein from Leishmania braziliensis.